The chain runs to 289 residues: Nucleotide-binding protein Franean1_2060 (289 aa).

Residue 13–20 (GLSGAGRS) coordinates ATP. 64–67 (DVRG) lines the GTP pocket.

This sequence belongs to the RapZ-like family.

Displays ATPase and GTPase activities. This is Nucleotide-binding protein Franean1_2060 from Parafrankia sp. (strain EAN1pec).